We begin with the raw amino-acid sequence, 362 residues long: Serine/threonine-protein kinase SBK2 (362 aa).

Over residues 1 to 11 the composition is skewed to basic and acidic residues; the sequence is MPGKQSEDRPM. Positions 1–20 are disordered; sequence MPGKQSEDRPMEVAAVEDGG. Residues 62-330 enclose the Protein kinase domain; it reads YEEVRPLGQG…IKSYLGQPWK (269 aa). Residues 68 to 76 and K91 each bind ATP; that span reads LGQGRFGRV. D183 serves as the catalytic Proton acceptor. Residues 317 to 362 are disordered; sequence PVSSIKSYLGQPWKQREEGAEELTKELREDGSRGGQEAAKGEQPAC. A compositionally biased stretch (basic and acidic residues) spans 330–348; the sequence is KQREEGAEELTKELREDGS.

It belongs to the protein kinase superfamily. Ser/Thr protein kinase family. STKL subfamily.

The catalysed reaction is L-seryl-[protein] + ATP = O-phospho-L-seryl-[protein] + ADP + H(+). It carries out the reaction L-threonyl-[protein] + ATP = O-phospho-L-threonyl-[protein] + ADP + H(+). In Rattus norvegicus (Rat), this protein is Serine/threonine-protein kinase SBK2 (Sbk2).